The sequence spans 118 residues: Large ribosomal subunit protein bL19 (118 aa).

It belongs to the bacterial ribosomal protein bL19 family.

Functionally, this protein is located at the 30S-50S ribosomal subunit interface and may play a role in the structure and function of the aminoacyl-tRNA binding site. This Dictyoglomus thermophilum (strain ATCC 35947 / DSM 3960 / H-6-12) protein is Large ribosomal subunit protein bL19.